Here is a 480-residue protein sequence, read N- to C-terminus: tRNA-2-methylthio-N(6)-dimethylallyladenosine synthase (480 aa).

One can recognise an MTTase N-terminal domain in the interval 32–149; it reads RKLYIRTFGC…LPELIRRRRA (118 aa). 6 residues coordinate [4Fe-4S] cluster: C41, C78, C112, C186, C190, and C193. In terms of domain architecture, Radical SAM core spans 172 to 405; that stretch reads RIEGATAFVS…QALINAQAAA (234 aa). One can recognise a TRAM domain in the interval 408–471; sequence QAMVGTRQRL…PNSLRARVAD (64 aa).

Belongs to the methylthiotransferase family. MiaB subfamily. Monomer. It depends on [4Fe-4S] cluster as a cofactor.

It is found in the cytoplasm. It catalyses the reaction N(6)-dimethylallyladenosine(37) in tRNA + (sulfur carrier)-SH + AH2 + 2 S-adenosyl-L-methionine = 2-methylsulfanyl-N(6)-dimethylallyladenosine(37) in tRNA + (sulfur carrier)-H + 5'-deoxyadenosine + L-methionine + A + S-adenosyl-L-homocysteine + 2 H(+). Its function is as follows. Catalyzes the methylthiolation of N6-(dimethylallyl)adenosine (i(6)A), leading to the formation of 2-methylthio-N6-(dimethylallyl)adenosine (ms(2)i(6)A) at position 37 in tRNAs that read codons beginning with uridine. The polypeptide is tRNA-2-methylthio-N(6)-dimethylallyladenosine synthase (Bordetella petrii (strain ATCC BAA-461 / DSM 12804 / CCUG 43448)).